The sequence spans 530 residues: Berberine bridge enzyme-like 22 (530 aa).

The signal sequence occupies residues 1–22 (MRELFMYLFLLFLVLCVKSVYS). C32 and C99 are joined by a disulfide. N-linked (GlcNAc...) asparagine glycosylation is found at N39, N47, N68, N75, N141, and N486. In terms of domain architecture, FAD-binding PCMH-type spans 77-251 (TSLKPILIVK…LSWKVKLARV (175 aa)). The segment at residues 114-176 (HDYEGLSYLS…KIHAFAAGIC (63 aa)) is a cross-link (6-(S-cysteinyl)-8alpha-(pros-histidyl)-FAD (His-Cys)).

This sequence belongs to the oxygen-dependent FAD-linked oxidoreductase family. Requires FAD as cofactor. Post-translationally, the FAD cofactor is bound via a bicovalent 6-S-cysteinyl, 8alpha-N1-histidyl FAD linkage. As to expression, accumulates in cell walls of etiolated hypocotyls.

The protein resides in the secreted. Its subcellular location is the cell wall. The sequence is that of Berberine bridge enzyme-like 22 from Arabidopsis thaliana (Mouse-ear cress).